A 190-amino-acid polypeptide reads, in one-letter code: Hypoxanthine/guanine phosphoribosyltransferase (190 aa).

This sequence belongs to the purine/pyrimidine phosphoribosyltransferase family. Archaeal HPRT subfamily. In terms of assembly, homodimer.

It is found in the cytoplasm. It carries out the reaction IMP + diphosphate = hypoxanthine + 5-phospho-alpha-D-ribose 1-diphosphate. It catalyses the reaction GMP + diphosphate = guanine + 5-phospho-alpha-D-ribose 1-diphosphate. Its pathway is purine metabolism; IMP biosynthesis via salvage pathway; IMP from hypoxanthine: step 1/1. Catalyzes a salvage reaction resulting in the formation of IMP that is energically less costly than de novo synthesis. This chain is Hypoxanthine/guanine phosphoribosyltransferase, found in Methanothrix thermoacetophila (strain DSM 6194 / JCM 14653 / NBRC 101360 / PT) (Methanosaeta thermophila).